The following is a 207-amino-acid chain: Small ribosomal subunit protein uS4c (207 aa).

A disordered region spans residues 20–52 (GFSKKIDRNHTPPGQHGWKKKASDQKKSKESQY). The segment covering 40-52 (KASDQKKSKESQY) has biased composition (basic and acidic residues). The S4 RNA-binding domain occupies 97 to 158 (MRLDNIIYRL…NSQQLIKNYL (62 aa)).

The protein belongs to the universal ribosomal protein uS4 family. Part of the 30S ribosomal subunit. Contacts protein S5. The interaction surface between S4 and S5 is involved in control of translational fidelity.

It localises to the plastid. In terms of biological role, one of the primary rRNA binding proteins, it binds directly to 16S rRNA where it nucleates assembly of the body of the 30S subunit. With S5 and S12 plays an important role in translational accuracy. In Prototheca wickerhamii, this protein is Small ribosomal subunit protein uS4c (rps4).